The chain runs to 358 residues: E3 ubiquitin-protein ligase RNF146 (358 aa).

The RING-type zinc-finger motif lies at 36 to 74 (CAICLQTCVHPVSLPCKHVFCYLCVKGASWLGKRCALCR). Glycyl lysine isopeptide (Lys-Gly) (interchain with G-Cter in ubiquitin) cross-links involve residues Lys-84 and Lys-94. Residues 91–167 (EELKAASRGN…EHGRRRKIKR (77 aa)) form the WWE domain. A glycoprotein contacts are provided by Tyr-107, Arg-110, and Trp-114. A Glycyl lysine isopeptide (Lys-Gly) (interchain with G-Cter in ubiquitin) cross-link involves residue Lys-130. The a glycoprotein site is built by Tyr-144, Gln-153, Arg-163, and Lys-175. Lys-175 is covalently cross-linked (Glycyl lysine isopeptide (Lys-Gly) (interchain with G-Cter in ubiquitin)). The disordered stretch occupies residues 253 to 358 (GDNTAERSHR…PDGQCTVTEV (106 aa)). Residues 283 to 297 (SIEETESDASSDSED) are compositionally biased toward acidic residues. Ser-289 and Ser-293 each carry phosphoserine. Over residues 305–322 (HSLTQQRLLVSNANQTVP) the composition is skewed to polar residues.

Can form homooligomers. Interacts with PARsylated AXIN1, AXIN2, BLZF1, CASC3, H1-2, IPO7, LIG3, NCL, PARP1, XRCC1, XRCC5 and XRCC6. Interacts with DDB1, DHX15, IQGAP1, LRPPRC, PARP2, PRKDC, RUVBL2, TNKS1 and TNKS2. Binding often leads to interactor ubiquitination, in the presence of the appropriate E1 and E2 enzymes, and proteasomal degradation. Post-translationally, ubiquitinated; autoubiquitinated. Autoubiquitination is enhanced upon poly(ADP-ribose)-binding.

It localises to the cytoplasm. The protein localises to the cytosol. The protein resides in the nucleus. It carries out the reaction S-ubiquitinyl-[E2 ubiquitin-conjugating enzyme]-L-cysteine + [acceptor protein]-L-lysine = [E2 ubiquitin-conjugating enzyme]-L-cysteine + N(6)-ubiquitinyl-[acceptor protein]-L-lysine.. It participates in protein modification; protein ubiquitination. Functionally, E3 ubiquitin-protein ligase that specifically binds poly-ADP-ribosylated (PARsylated) proteins and mediates their ubiquitination and subsequent degradation. May regulate many important biological processes, such as cell survival and DNA damage response. Acts as an activator of the Wnt signaling pathway by mediating the ubiquitination of PARsylated AXIN1 and AXIN2, 2 key components of the beta-catenin destruction complex. Acts in cooperation with tankyrase proteins (TNKS and TNKS2), which mediate PARsylation of target proteins AXIN1, AXIN2, BLZF1, CASC3, TNKS and TNKS2. Recognizes and binds tankyrase-dependent PARsylated proteins via its WWE domain and mediates their ubiquitination, leading to their degradation. Different ubiquitin linkage types have been observed: TNKS2 undergoes ubiquitination at 'Lys-48' and 'Lys-63', while AXIN1 is only ubiquitinated at 'Lys-48'. May regulate TNKS and TNKS2 subcellular location, preventing aggregation at a centrosomal location. Neuroprotective protein. Protects the brain against N-methyl-D-aspartate (NMDA) receptor-mediated glutamate excitotoxicity and ischemia, by interfering with PAR-induced cell death, called parthanatos. Prevents nuclear translocation of AIFM1 in a PAR-binding dependent manner. Does not affect PARP1 activation. Protects against cell death induced by DNA damaging agents, such as N-methyl-N-nitro-N-nitrosoguanidine (MNNG) and rescues cells from G1 arrest. Promotes cell survival after gamma-irradiation. Facilitates DNA repair. The chain is E3 ubiquitin-protein ligase RNF146 (RNF146) from Pongo abelii (Sumatran orangutan).